Reading from the N-terminus, the 294-residue chain is ATP synthase gamma chain (294 aa).

Belongs to the ATPase gamma chain family. In terms of assembly, F-type ATPases have 2 components, CF(1) - the catalytic core - and CF(0) - the membrane proton channel. CF(1) has five subunits: alpha(3), beta(3), gamma(1), delta(1), epsilon(1). CF(0) has three main subunits: a, b and c.

It is found in the cell inner membrane. Produces ATP from ADP in the presence of a proton gradient across the membrane. The gamma chain is believed to be important in regulating ATPase activity and the flow of protons through the CF(0) complex. In Paramagnetospirillum magneticum (strain ATCC 700264 / AMB-1) (Magnetospirillum magneticum), this protein is ATP synthase gamma chain.